A 488-amino-acid polypeptide reads, in one-letter code: 3-octaprenyl-4-hydroxybenzoate carboxy-lyase (488 aa).

Residue asparagine 172 participates in Mn(2+) binding. Prenylated FMN is bound by residues 175 to 177 (IYR), 189 to 191 (RWL), and 194 to 195 (RG). Mn(2+) is bound at residue glutamate 238. Aspartate 287 acts as the Proton donor in catalysis.

Belongs to the UbiD family. In terms of assembly, homohexamer. Prenylated FMN is required as a cofactor. The cofactor is Mn(2+).

The protein localises to the cell membrane. The catalysed reaction is a 4-hydroxy-3-(all-trans-polyprenyl)benzoate + H(+) = a 2-(all-trans-polyprenyl)phenol + CO2. The protein operates within cofactor biosynthesis; ubiquinone biosynthesis. Catalyzes the decarboxylation of 3-octaprenyl-4-hydroxy benzoate to 2-octaprenylphenol, an intermediate step in ubiquinone biosynthesis. This chain is 3-octaprenyl-4-hydroxybenzoate carboxy-lyase, found in Shewanella oneidensis (strain ATCC 700550 / JCM 31522 / CIP 106686 / LMG 19005 / NCIMB 14063 / MR-1).